The sequence spans 311 residues: HPr kinase/phosphorylase (311 aa).

Active-site residues include H138 and K159. G153–S160 contacts ATP. S160 serves as a coordination point for Mg(2+). The active-site Proton acceptor; for phosphorylation activity. Proton donor; for dephosphorylation activity is D177. An important for the catalytic mechanism of both phosphorylation and dephosphorylation region spans residues I201–D210. E202 is a Mg(2+) binding site. R243 is a catalytic residue. Positions P264–R269 are important for the catalytic mechanism of dephosphorylation.

Belongs to the HPrK/P family. In terms of assembly, homohexamer. Requires Mg(2+) as cofactor.

It catalyses the reaction [HPr protein]-L-serine + ATP = [HPr protein]-O-phospho-L-serine + ADP + H(+). The catalysed reaction is [HPr protein]-O-phospho-L-serine + phosphate + H(+) = [HPr protein]-L-serine + diphosphate. Its function is as follows. Catalyzes the ATP- as well as the pyrophosphate-dependent phosphorylation of a specific serine residue in HPr, a phosphocarrier protein of the phosphoenolpyruvate-dependent sugar phosphotransferase system (PTS). HprK/P also catalyzes the pyrophosphate-producing, inorganic phosphate-dependent dephosphorylation (phosphorolysis) of seryl-phosphorylated HPr (P-Ser-HPr). The two antagonistic activities of HprK/P are regulated by several intracellular metabolites, which change their concentration in response to the absence or presence of rapidly metabolisable carbon sources (glucose, fructose, etc.) in the growth medium. Therefore, by controlling the phosphorylation state of HPr, HPrK/P is a sensor enzyme that plays a major role in the regulation of carbon metabolism and sugar transport: it mediates carbon catabolite repression (CCR), and regulates PTS-catalyzed carbohydrate uptake and inducer exclusion. The protein is HPr kinase/phosphorylase of Streptococcus pneumoniae serotype 2 (strain D39 / NCTC 7466).